Consider the following 204-residue polypeptide: Large ribosomal subunit protein bL25 (204 aa).

It belongs to the bacterial ribosomal protein bL25 family. CTC subfamily. Part of the 50S ribosomal subunit; part of the 5S rRNA/L5/L18/L25 subcomplex. Contacts the 5S rRNA. Binds to the 5S rRNA independently of L5 and L18.

Functionally, this is one of the proteins that binds to the 5S RNA in the ribosome where it forms part of the central protuberance. The protein is Large ribosomal subunit protein bL25 of Pseudoalteromonas translucida (strain TAC 125).